The following is a 391-amino-acid chain: Toluene efflux pump periplasmic linker protein TtgG (391 aa).

Residues 1 to 32 (MRAERWSQTVRQIRSPRALRVIPLTALMLISG) form the signal peptide. C33 is lipidated: N-palmitoyl cysteine. C33 is lipidated: S-diacylglycerol cysteine. A coiled-coil region spans residues 107 to 136 (RTYEAQLRRAEANRTSAQNLARRYETLLKT).

It belongs to the membrane fusion protein (MFP) (TC 8.A.1) family.

The protein resides in the cell inner membrane. Functionally, the periplasmic linker component of an organic solvent efflux pump. Involved in export of a number of organic solvents, including toluene and styrene. This is the most important solvent efflux pump in this strain, although it can export AMP and some antibiotics. In Pseudomonas putida (strain DOT-T1E), this protein is Toluene efflux pump periplasmic linker protein TtgG (ttgG).